Consider the following 202-residue polypeptide: Putative 3-methyladenine DNA glycosylase (202 aa).

The protein belongs to the DNA glycosylase MPG family.

The chain is Putative 3-methyladenine DNA glycosylase from Clostridioides difficile (strain 630) (Peptoclostridium difficile).